A 361-amino-acid chain; its full sequence is UDP-N-acetylglucosamine--N-acetylmuramyl-(pentapeptide) pyrophosphoryl-undecaprenol N-acetylglucosamine transferase (361 aa).

Residues 13 to 15 (TGG), Asn125, Arg167, Ser196, Ile251, 270 to 275 (ALTVTE), and Gln296 contribute to the UDP-N-acetyl-alpha-D-glucosamine site.

This sequence belongs to the glycosyltransferase 28 family. MurG subfamily.

Its subcellular location is the cell inner membrane. It catalyses the reaction di-trans,octa-cis-undecaprenyl diphospho-N-acetyl-alpha-D-muramoyl-L-alanyl-D-glutamyl-meso-2,6-diaminopimeloyl-D-alanyl-D-alanine + UDP-N-acetyl-alpha-D-glucosamine = di-trans,octa-cis-undecaprenyl diphospho-[N-acetyl-alpha-D-glucosaminyl-(1-&gt;4)]-N-acetyl-alpha-D-muramoyl-L-alanyl-D-glutamyl-meso-2,6-diaminopimeloyl-D-alanyl-D-alanine + UDP + H(+). It participates in cell wall biogenesis; peptidoglycan biosynthesis. Its function is as follows. Cell wall formation. Catalyzes the transfer of a GlcNAc subunit on undecaprenyl-pyrophosphoryl-MurNAc-pentapeptide (lipid intermediate I) to form undecaprenyl-pyrophosphoryl-MurNAc-(pentapeptide)GlcNAc (lipid intermediate II). This chain is UDP-N-acetylglucosamine--N-acetylmuramyl-(pentapeptide) pyrophosphoryl-undecaprenol N-acetylglucosamine transferase, found in Psychrobacter arcticus (strain DSM 17307 / VKM B-2377 / 273-4).